The sequence spans 752 residues: Endo-1,4-beta-xylanase 3 (752 aa).

The interval 1 to 22 is disordered; that stretch reads MEKNTNTNHTSDDNNDKNHTNE. Residues 10-22 show a composition bias toward basic and acidic residues; sequence TSDDNNDKNHTNE. CBM-cenC domains follow at residues 26-163 and 197-344; these read KIIL…EGPP and NIVE…VQGP. The GH10 domain maps to 397–692; that stretch reads FPYIVKVKQT…NEAGKRFLEV (296 aa). Glu-526 acts as the Proton donor in catalysis. Catalysis depends on Glu-627, which acts as the Nucleophile.

This sequence belongs to the glycosyl hydrolase 10 (cellulase F) family. In terms of tissue distribution, confined to immature xylems.

It catalyses the reaction Endohydrolysis of (1-&gt;4)-beta-D-xylosidic linkages in xylans.. It participates in glycan degradation; xylan degradation. Functionally, binds to and hydrolyzes insoluble and soluble xylan substrates. This chain is Endo-1,4-beta-xylanase 3, found in Arabidopsis thaliana (Mouse-ear cress).